We begin with the raw amino-acid sequence, 101 residues long: Guanyl-specific ribonuclease St (101 aa).

A disulfide bond links C4 and C54. The Proton acceptor role is filled by E61. Catalysis depends on H91, which acts as the Proton donor.

This sequence belongs to the ribonuclease N1/T1 family.

The catalysed reaction is [RNA] containing guanosine + H2O = an [RNA fragment]-3'-guanosine-3'-phosphate + a 5'-hydroxy-ribonucleotide-3'-[RNA fragment].. The polypeptide is Guanyl-specific ribonuclease St (Saccharopolyspora erythraea (Streptomyces erythraeus)).